The following is a 123-amino-acid chain: Large ribosomal subunit protein bL12 (123 aa).

It belongs to the bacterial ribosomal protein bL12 family. In terms of assembly, homodimer. Part of the ribosomal stalk of the 50S ribosomal subunit. Forms a multimeric L10(L12)X complex, where L10 forms an elongated spine to which 2 to 4 L12 dimers bind in a sequential fashion. Binds GTP-bound translation factors.

Its function is as follows. Forms part of the ribosomal stalk which helps the ribosome interact with GTP-bound translation factors. Is thus essential for accurate translation. The sequence is that of Large ribosomal subunit protein bL12 from Neisseria meningitidis serogroup C (strain 053442).